We begin with the raw amino-acid sequence, 121 residues long: Type II secretion system protein I (121 aa).

Positions 1-6 are cleaved as a propeptide — leader sequence; the sequence is MRRQKG. Position 7 is an N-methylmethionine (Met-7). A helical membrane pass occupies residues 7-27; that stretch reads MTLVEVLVALSVFALAGIAVL.

It belongs to the GSP I family. Type II secretion is composed of four main components: the outer membrane complex, the inner membrane complex, the cytoplasmic secretion ATPase and the periplasm-spanning pseudopilus. Interacts with core component OutG. Post-translationally, cleaved by prepilin peptidase. In terms of processing, methylated by prepilin peptidase at the amino group of the N-terminal methionine once the leader sequence is cleaved by prepilin peptidase.

The protein localises to the cell inner membrane. Its function is as follows. Component of the type II secretion system required for the energy-dependent secretion of extracellular factors such as proteases and toxins from the periplasm. Part of the pseudopilus tip complex that is critical for the recognition and binding of secretion substrates. The sequence is that of Type II secretion system protein I (outI) from Pectobacterium carotovorum subsp. carotovorum (Erwinia carotovora subsp. carotovora).